A 130-amino-acid polypeptide reads, in one-letter code: L-ectoine synthase (130 aa).

This sequence belongs to the ectoine synthase family.

It catalyses the reaction (2S)-4-acetamido-2-aminobutanoate = L-ectoine + H2O. The protein operates within amine and polyamine biosynthesis; ectoine biosynthesis; L-ectoine from L-aspartate 4-semialdehyde: step 3/3. Catalyzes the circularization of gamma-N-acetyl-alpha,gamma-diaminobutyric acid (ADABA) to ectoine (1,4,5,6-tetrahydro-2-methyl-4-pyrimidine carboxylic acid), which is an excellent osmoprotectant. The chain is L-ectoine synthase from Mycolicibacterium vanbaalenii (strain DSM 7251 / JCM 13017 / BCRC 16820 / KCTC 9966 / NRRL B-24157 / PYR-1) (Mycobacterium vanbaalenii).